Consider the following 782-residue polypeptide: E3 UFM1-protein ligase 1 homolog (782 aa).

A disordered region spans residues 405–478; the sequence is VSTQELEDDG…TRGGGGASKK (74 aa).

This sequence belongs to the UFL1 family.

Functionally, E3 UFM1-protein ligase that mediates ufmylation of target proteins. The protein is E3 UFM1-protein ligase 1 homolog of Drosophila sechellia (Fruit fly).